Reading from the N-terminus, the 146-residue chain is Hemoglobin subunit beta (146 aa).

Val1 is modified (N-acetylvaline). Residues 2–146 (HLTGEEKSAV…VANALAHKYH (145 aa)) enclose the Globin domain. Thr12 is modified (phosphothreonine). Ser44 is modified (phosphoserine). Lys59 carries the N6-acetyllysine modification. His63 is a binding site for heme b. Position 82 is an N6-acetyllysine (Lys82). Heme b is bound at residue His92. S-nitrosocysteine is present on Cys93. Lys144 is subject to N6-acetyllysine.

This sequence belongs to the globin family. As to quaternary structure, heterotetramer of two alpha chains and two beta chains. As to expression, red blood cells.

Functionally, involved in oxygen transport from the lung to the various peripheral tissues. The sequence is that of Hemoglobin subunit beta (HBB) from Phoca vitulina (Harbor seal).